The chain runs to 293 residues: Phosphatidylserine decarboxylase proenzyme (293 aa).

Residues Asp88, His144, and Ser247 each act as charge relay system; for autoendoproteolytic cleavage activity in the active site. Ser247 (schiff-base intermediate with substrate; via pyruvic acid; for decarboxylase activity) is an active-site residue. Pyruvic acid (Ser); by autocatalysis is present on Ser247.

It belongs to the phosphatidylserine decarboxylase family. PSD-B subfamily. Prokaryotic type I sub-subfamily. As to quaternary structure, heterodimer of a large membrane-associated beta subunit and a small pyruvoyl-containing alpha subunit. Requires pyruvate as cofactor. Is synthesized initially as an inactive proenzyme. Formation of the active enzyme involves a self-maturation process in which the active site pyruvoyl group is generated from an internal serine residue via an autocatalytic post-translational modification. Two non-identical subunits are generated from the proenzyme in this reaction, and the pyruvate is formed at the N-terminus of the alpha chain, which is derived from the carboxyl end of the proenzyme. The autoendoproteolytic cleavage occurs by a canonical serine protease mechanism, in which the side chain hydroxyl group of the serine supplies its oxygen atom to form the C-terminus of the beta chain, while the remainder of the serine residue undergoes an oxidative deamination to produce ammonia and the pyruvoyl prosthetic group on the alpha chain. During this reaction, the Ser that is part of the protease active site of the proenzyme becomes the pyruvoyl prosthetic group, which constitutes an essential element of the active site of the mature decarboxylase.

The protein localises to the cell membrane. It catalyses the reaction a 1,2-diacyl-sn-glycero-3-phospho-L-serine + H(+) = a 1,2-diacyl-sn-glycero-3-phosphoethanolamine + CO2. The protein operates within phospholipid metabolism; phosphatidylethanolamine biosynthesis; phosphatidylethanolamine from CDP-diacylglycerol: step 2/2. Catalyzes the formation of phosphatidylethanolamine (PtdEtn) from phosphatidylserine (PtdSer). The polypeptide is Phosphatidylserine decarboxylase proenzyme (Xylella fastidiosa (strain 9a5c)).